We begin with the raw amino-acid sequence, 654 residues long: Marinolic acid--CoA ligase (654 aa).

It belongs to the ATP-dependent AMP-binding enzyme family.

It catalyses the reaction ATP + a marinolic acid + CoA = AMP + diphosphate + a marinoloyl-CoA.. It carries out the reaction ATP + a pseudomonic acid + CoA = AMP + diphosphate + a pseudomonoyl-CoA.. The catalysed reaction is marinolate C + ATP + CoA = marinoloyl-CoA C + AMP + diphosphate. The enzyme catalyses pseudomonate C + ATP + CoA = pseudomonoyl-CoA C + AMP + diphosphate. Its pathway is antibiotic biosynthesis. Acyl-CoA ligase that catalyzes the CoA acylation of pseudomonate C, leading to the formation of pseudomonoyl-CoA C (PAC-CoA). Also shows high activity with pseudomonoyl-CoA A as substrate. In addition, can activate acetic, octanoic, 2,4-dodecadienoic and 2,4-decadienoic acids, although with much lower activity. In vivo, is probably involved in the biosynthesis of thiomarinol, a naturally occurring double-headed antibiotic. This Pseudoalteromonas sp. (strain SANK 73390) protein is Marinolic acid--CoA ligase.